We begin with the raw amino-acid sequence, 319 residues long: MGFNINIIGTGGTRPLHNRYLSSVLIEYNGDNFLFDCGEGTQMSLRKQKISWQKIKMICITHLHADHITGLLGIVMLMSQSGETRKEPLIIAGPVGIKNYTKTNIDILKIYKNYEIIYKEIIIDKTEKIIYEDKTKKIEYTRLKHSIECVGYLFIEKDKPGKFNTEKAEELNIPKGPIRKTLQDGKEILIDGKIIKPSEILGESKKGLKVAYITDTGYFKELIQQIKNFNLVIIESTFKNELKKEADKKLHLTAGGAANIVKQAKVLKTGLIHFSERYTLRKDLENLLKEAKLEYPDGEIFLTKDGMRLEANKNNFIIK.

His-62, His-64, Asp-66, His-67, His-145, Asp-215, and His-273 together coordinate Zn(2+). Asp-66 acts as the Proton acceptor in catalysis.

This sequence belongs to the RNase Z family. Homodimer. Requires Zn(2+) as cofactor.

The enzyme catalyses Endonucleolytic cleavage of RNA, removing extra 3' nucleotides from tRNA precursor, generating 3' termini of tRNAs. A 3'-hydroxy group is left at the tRNA terminus and a 5'-phosphoryl group is left at the trailer molecule.. In terms of biological role, zinc phosphodiesterase, which displays some tRNA 3'-processing endonuclease activity. Probably involved in tRNA maturation, by removing a 3'-trailer from precursor tRNA. The protein is Ribonuclease Z of Borrelia garinii subsp. bavariensis (strain ATCC BAA-2496 / DSM 23469 / PBi) (Borreliella bavariensis).